The following is a 212-amino-acid chain: Thymidylate kinase (212 aa).

Residue glycine 10–threonine 17 coordinates ATP.

It belongs to the thymidylate kinase family.

It carries out the reaction dTMP + ATP = dTDP + ADP. Phosphorylation of dTMP to form dTDP in both de novo and salvage pathways of dTTP synthesis. This is Thymidylate kinase from Cronobacter sakazakii (strain ATCC BAA-894) (Enterobacter sakazakii).